The following is a 168-amino-acid chain: Small ribosomal subunit protein bS6 (168 aa).

Positions 103–168 (RQAIAEEKEK…AAADKSDDNA (66 aa)) are disordered. Over residues 106–115 (IAEEKEKKAE) the composition is skewed to basic and acidic residues. The span at 116-125 (GQAAADAAPA) shows a compositional bias: low complexity.

Belongs to the bacterial ribosomal protein bS6 family.

In terms of biological role, binds together with bS18 to 16S ribosomal RNA. The polypeptide is Small ribosomal subunit protein bS6 (Desulfosudis oleivorans (strain DSM 6200 / JCM 39069 / Hxd3) (Desulfococcus oleovorans)).